Consider the following 531-residue polypeptide: MILPAPHVEYFLLAPMLIVFSVAVAGVLAEAFLPRRWRYGAQVTLALGGSAVALIAVIVVARSIHGSGHAAVLGAIAVDRATLFLQGTVLLVTIMAVVFMAERSARVSPQRQNTLAVARLPGLDSFTPQLSAVPGSDAERQAERAGATQTELFPLAMLSVGGMMVFPASNDLLTMFVALEVLSLPLYLMCGLARNRRLLSQEAAMKYFLLGAFSSAFFLYGVALLYGATGTLTLPGIRDALAARTDDSMALAGVALLAVGLLFKVGAVPFHSWIPDVYQGAPTPITGFMAAATKVAAFGALLRVVYVALPPLHDQWRPVLWAIAILTMTVGTVTAVNQTNVKRMLAYSSVAHVGFILTGVIADNPAGLSATLFYLVAYSFSTMGAFAIVGLVRGADGSAGSEDADLSHWAGLGQRSPIVGVMLSMFLLAFAGIPLTSGFVSKFAVFRAAASAGAVPLVIVGVISSGVAAYFYVRVIVSMFFTEESGDTPHVAAPGVLSKAAIAVCTVVTVVLGIAPQPVLDLADQAAQLLR.

A run of 14 helical transmembrane segments spans residues 8 to 28 (VEYFLLAPMLIVFSVAVAGVL), 41 to 61 (AQVTLALGGSAVALIAVIVVA), 81 to 101 (ATLFLQGTVLLVTIMAVVFMA), 146 to 166 (GATQTELFPLAMLSVGGMMVF), 172 to 192 (LLTMFVALEVLSLPLYLMCGL), 208 to 228 (FLLGAFSSAFFLYGVALLYGA), 250 to 270 (ALAGVALLAVGLLFKVGAVPF), 282 to 302 (PTPITGFMAAATKVAAFGALL), 318 to 338 (PVLWAIAILTMTVGTVTAVNQ), 350 to 370 (VAHVGFILTGVIADNPAGLSA), 372 to 392 (LFYLVAYSFSTMGAFAIVGLV), 418 to 438 (IVGVMLSMFLLAFAGIPLTSG), 453 to 473 (GAVPLVIVGVISSGVAAYFYV), and 500 to 520 (AAIAVCTVVTVVLGIAPQPVL).

It belongs to the complex I subunit 2 family. As to quaternary structure, NDH-1 is composed of 14 different subunits. Subunits NuoA, H, J, K, L, M, N constitute the membrane sector of the complex.

The protein localises to the cell membrane. It catalyses the reaction a quinone + NADH + 5 H(+)(in) = a quinol + NAD(+) + 4 H(+)(out). Its function is as follows. NDH-1 shuttles electrons from NADH, via FMN and iron-sulfur (Fe-S) centers, to quinones in the respiratory chain. The immediate electron acceptor for the enzyme in this species is believed to be a menaquinone. Couples the redox reaction to proton translocation (for every two electrons transferred, four hydrogen ions are translocated across the cytoplasmic membrane), and thus conserves the redox energy in a proton gradient. In Mycobacterium tuberculosis (strain CDC 1551 / Oshkosh), this protein is NADH-quinone oxidoreductase subunit N.